Consider the following 339-residue polypeptide: Endospore coat-associated protein YutH (339 aa).

The protein belongs to the CotS family.

The protein localises to the forespore outer membrane. It localises to the spore coat. In terms of biological role, involved in sporulation. The polypeptide is Endospore coat-associated protein YutH (yutH) (Bacillus subtilis (strain 168)).